A 444-amino-acid chain; its full sequence is Type I restriction enzyme EcoDI specificity subunit (444 aa).

It belongs to the type-I restriction system S methylase family. In terms of assembly, the type I restriction/modification system is composed of three polypeptides R, M and S; the restriction enzyme has stoichiometry R(2)M(2)S(1) while the methyltransferase is M(2)S(1).

The specificity (S) subunit of a type I restriction enzyme; this subunit dictates DNA sequence specificity. The M and S subunits together form a methyltransferase (MTase) that methylates two adenine residues of the sequence 5'-TTAN(7)GTCY-3'. In the presence of the R subunit the complex can also act as an endonuclease, binding to the same target sequence but cutting the DNA some distance from this site. Whether the DNA is cut or modified depends on the methylation state of the target sequence. When the target site is unmodified, the DNA is cut. When the target site is hemimethylated, the complex acts as a maintenance MTase modifying the DNA so that both strands become methylated. After locating a non-methylated recognition site, the enzyme complex serves as a molecular motor that translocates DNA in an ATP-dependent manner until a collision occurs that triggers cleavage. This chain is Type I restriction enzyme EcoDI specificity subunit, found in Escherichia coli.